The primary structure comprises 391 residues: Protein CapJ (391 aa).

It functions in the pathway capsule biogenesis; capsule polysaccharide biosynthesis. Required for the biosynthesis of type 1 capsular polysaccharide. The protein is Protein CapJ (capJ) of Staphylococcus aureus.